The chain runs to 427 residues: Glutamate-1-semialdehyde 2,1-aminomutase (427 aa).

The residue at position 267 (Lys-267) is an N6-(pyridoxal phosphate)lysine.

This sequence belongs to the class-III pyridoxal-phosphate-dependent aminotransferase family. HemL subfamily. In terms of assembly, homodimer. Pyridoxal 5'-phosphate serves as cofactor.

Its subcellular location is the cytoplasm. It carries out the reaction (S)-4-amino-5-oxopentanoate = 5-aminolevulinate. It participates in porphyrin-containing compound metabolism; protoporphyrin-IX biosynthesis; 5-aminolevulinate from L-glutamyl-tRNA(Glu): step 2/2. The protein is Glutamate-1-semialdehyde 2,1-aminomutase of Desulfosudis oleivorans (strain DSM 6200 / JCM 39069 / Hxd3) (Desulfococcus oleovorans).